The chain runs to 948 residues: RNA polymerase-associated protein RapA (948 aa).

In terms of domain architecture, Helicase ATP-binding spans 164-332 (EVADRSAPRV…FARLRLLDPN (169 aa)). 177–184 (DEVGLGKT) contacts ATP. A DEAH box motif is present at residues 278-281 (DEAH). The region spanning 473-627 (RVDWLIDTLK…TCPTGNALQH (155 aa)) is the Helicase C-terminal domain.

Belongs to the SNF2/RAD54 helicase family. RapA subfamily. Interacts with the RNAP. Has a higher affinity for the core RNAP than for the holoenzyme. Its ATPase activity is stimulated by binding to RNAP.

Its function is as follows. Transcription regulator that activates transcription by stimulating RNA polymerase (RNAP) recycling in case of stress conditions such as supercoiled DNA or high salt concentrations. Probably acts by releasing the RNAP, when it is trapped or immobilized on tightly supercoiled DNA. Does not activate transcription on linear DNA. Probably not involved in DNA repair. The protein is RNA polymerase-associated protein RapA of Pseudomonas putida (strain ATCC 47054 / DSM 6125 / CFBP 8728 / NCIMB 11950 / KT2440).